The primary structure comprises 294 residues: N-acetylmuramic acid 6-phosphate etherase (294 aa).

An SIS domain is found at V54 to K217. E82 serves as the catalytic Proton donor. The active site involves E113.

It belongs to the GCKR-like family. MurNAc-6-P etherase subfamily. As to quaternary structure, homodimer.

It catalyses the reaction N-acetyl-D-muramate 6-phosphate + H2O = N-acetyl-D-glucosamine 6-phosphate + (R)-lactate. It functions in the pathway amino-sugar metabolism; N-acetylmuramate degradation. Specifically catalyzes the cleavage of the D-lactyl ether substituent of MurNAc 6-phosphate, producing GlcNAc 6-phosphate and D-lactate. The protein is N-acetylmuramic acid 6-phosphate etherase of Bacillus anthracis (strain A0248).